Reading from the N-terminus, the 823-residue chain is Translation initiation factor IF-2 (823 aa).

Disordered regions lie at residues 30–66 (VPPSLARGTSTGKSFTTVEVRSKKRRPGEYISHDDKR) and 156–192 (TPSHSNKSGHDDRGGKKYAHGATGRHKEKEGVSIKKV). Over residues 36 to 48 (RGTSTGKSFTTVE) the composition is skewed to polar residues. A compositionally biased stretch (basic and acidic residues) spans 56 to 66 (PGEYISHDDKR). One can recognise a tr-type G domain in the interval 322–491 (PRPPVVTVMG…LLLAEMLELS (170 aa)). The G1 stretch occupies residues 331–338 (GHVDHGKT). 331–338 (GHVDHGKT) contacts GTP. A G2 region spans residues 356–360 (GITQH). Positions 377 to 380 (DTPG) are G3. GTP is bound by residues 377 to 381 (DTPGH) and 431 to 434 (NKID). The tract at residues 431 to 434 (NKID) is G4. Residues 467–469 (SAK) are G5.

It belongs to the TRAFAC class translation factor GTPase superfamily. Classic translation factor GTPase family. IF-2 subfamily.

It localises to the cytoplasm. In terms of biological role, one of the essential components for the initiation of protein synthesis. Protects formylmethionyl-tRNA from spontaneous hydrolysis and promotes its binding to the 30S ribosomal subunits. Also involved in the hydrolysis of GTP during the formation of the 70S ribosomal complex. The protein is Translation initiation factor IF-2 of Anaplasma phagocytophilum (strain HZ).